We begin with the raw amino-acid sequence, 556 residues long: MNTPSSPAHFIRNIIEEDNRTGKWNGRVETRFPPEPNGYLHIGHAKSICLNFGLALEYGGVCHLRFDDTNPEKEAQEYVDAIIESVRWLGFDWKEHLYYASDYFDQLYEFAEYLITQGKAYVDSLSADEIRRLRGTLTEAGTNSPYRDRSAEENLDLFRRMRAGEFPDGVHVLRARIDMASPNINLRDPVIYRIRHIHHQRTGDKWCIYPMYDYTHCISDALERITHSLCTLEFEDHRPLYDWVLDQLAEKIPCHPQQIEFARLNLTYSVMSKRKLIDLVENKLVDGWNDPRMNTLAGLRRRGYTPESIRLFAERIGISKADSWIDMTILEDCLREDLNERALRRIAVLDPVSLIIDNFPDGHEETCYAPNHPQKPELGTRELRLTKQLYIDREDFMEIPNKGFFRLAPGAEVRLRYAFIIKCTHVVKDDQGKILEIHCVYDPDTKSGTAGAETRKVRGNIHWLSATYAKAVEIRLYDRLFIDSHPDTEGKDFKISLNPNSKEVITGYVEPSLCEAQPEQRFQFERHGYFVADLADTGPGKPIFNRTVSLRNTWKK.

Residues 34–44 (PEPNGYLHIGH) carry the 'HIGH' region motif. Residues 35–37 (EPN) and 41–47 (HIGHAKS) contribute to the ATP site. L-glutamine contacts are provided by Asp-67 and Tyr-212. Residues Thr-231, 263–264 (RL), and 271–273 (MSK) contribute to the ATP site. The 'KMSKS' region motif lies at 270 to 274 (VMSKR).

The protein belongs to the class-I aminoacyl-tRNA synthetase family. Monomer.

Its subcellular location is the cytoplasm. The catalysed reaction is tRNA(Gln) + L-glutamine + ATP = L-glutaminyl-tRNA(Gln) + AMP + diphosphate. This chain is Glutamine--tRNA ligase, found in Nitrosomonas europaea (strain ATCC 19718 / CIP 103999 / KCTC 2705 / NBRC 14298).